A 421-amino-acid polypeptide reads, in one-letter code: O-glycoside alpha-1,2-mannosyltransferase homolog 5 (421 aa).

The active-site Nucleophile is E318.

It belongs to the glycosyltransferase 15 family.

The protein localises to the cytoplasm. Probable mannosyltransferase involved in O-glycosylation of cell wall and secreted proteins. The protein is O-glycoside alpha-1,2-mannosyltransferase homolog 5 (omh5) of Schizosaccharomyces pombe (strain 972 / ATCC 24843) (Fission yeast).